The chain runs to 54 residues: ATP synthase F(0) complex subunit 8 (54 aa).

The helical transmembrane segment at 13 to 35 threads the bilayer; it reads ALSLWVCFPLMMLSLSSFLPLTL.

This sequence belongs to the ATPase protein 8 family. Component of the ATP synthase complex composed at least of ATP5F1A/subunit alpha, ATP5F1B/subunit beta, ATP5MC1/subunit c (homooctomer), MT-ATP6/subunit a, MT-ATP8/subunit 8, ATP5ME/subunit e, ATP5MF/subunit f, ATP5MG/subunit g, ATP5MK/subunit k, ATP5MJ/subunit j, ATP5F1C/subunit gamma, ATP5F1D/subunit delta, ATP5F1E/subunit epsilon, ATP5PF/subunit F6, ATP5PB/subunit b, ATP5PD/subunit d, ATP5PO/subunit OSCP. ATP synthase complex consists of a soluble F(1) head domain (subunits alpha(3) and beta(3)) - the catalytic core - and a membrane F(0) domain - the membrane proton channel (subunits c, a, 8, e, f, g, k and j). These two domains are linked by a central stalk (subunits gamma, delta, and epsilon) rotating inside the F1 region and a stationary peripheral stalk (subunits F6, b, d, and OSCP).

It localises to the mitochondrion membrane. Functionally, subunit 8, of the mitochondrial membrane ATP synthase complex (F(1)F(0) ATP synthase or Complex V) that produces ATP from ADP in the presence of a proton gradient across the membrane which is generated by electron transport complexes of the respiratory chain. ATP synthase complex consist of a soluble F(1) head domain - the catalytic core - and a membrane F(1) domain - the membrane proton channel. These two domains are linked by a central stalk rotating inside the F(1) region and a stationary peripheral stalk. During catalysis, ATP synthesis in the catalytic domain of F(1) is coupled via a rotary mechanism of the central stalk subunits to proton translocation. In vivo, can only synthesize ATP although its ATP hydrolase activity can be activated artificially in vitro. Part of the complex F(0) domain. The chain is ATP synthase F(0) complex subunit 8 from Myxine glutinosa (Atlantic hagfish).